Consider the following 137-residue polypeptide: Endoribonuclease YbeY (137 aa).

Zn(2+) is bound by residues H105, H109, and D115.

Belongs to the endoribonuclease YbeY family. The cofactor is Zn(2+).

The protein localises to the cytoplasm. Its function is as follows. Single strand-specific metallo-endoribonuclease involved in late-stage 70S ribosome quality control and in maturation of the 3' terminus of the 16S rRNA. This Chlorobaculum tepidum (strain ATCC 49652 / DSM 12025 / NBRC 103806 / TLS) (Chlorobium tepidum) protein is Endoribonuclease YbeY.